The following is a 127-amino-acid chain: Large ribosomal subunit protein uL18 (127 aa).

Positions 1–26 (MASTLTVRKSLSDRAKARARRQARGR) are disordered. The span at 17 to 26 (ARARRQARGR) shows a compositional bias: basic residues.

It belongs to the universal ribosomal protein uL18 family. Part of the 50S ribosomal subunit; part of the 5S rRNA/L5/L18/L25 subcomplex. Contacts the 5S and 23S rRNAs.

In terms of biological role, this is one of the proteins that bind and probably mediate the attachment of the 5S RNA into the large ribosomal subunit, where it forms part of the central protuberance. The polypeptide is Large ribosomal subunit protein uL18 (Cutibacterium acnes (strain DSM 16379 / KPA171202) (Propionibacterium acnes)).